The following is a 949-amino-acid chain: Glutamate receptor ionotropic, kainate 1 (949 aa).

The first 30 residues, 1-30 (MERSTVLIQPGLWTRDTSWTLLYFLCYILP), serve as a signal peptide directing secretion. At 31 to 576 (QTSPQVLRIG…VFSFLNPLSP (546 aa)) the chain is on the extracellular side. N-linked (GlcNAc...) asparagine glycosylation is found at Asn68, Asn74, Asn276, Asn379, Asn428, Asn439, and Asn446. Residues Pro531, Thr533, and Arg538 each coordinate L-glutamate. Asn561 carries N-linked (GlcNAc...) asparagine glycosylation. A helical transmembrane segment spans residues 577-597 (DIWMYVLLACLGVSCVLFVIA). Residues 598 to 653 (RFTPYEWYNPHPCNPDSDVVENNFTLLNSFWFGVGALMQQGSELMPKALSTRIVGG) are Cytoplasmic-facing. The helical transmembrane segment at 654 to 674 (IWWFFTLIIISSYTANLAAFL) threads the bilayer. The Extracellular portion of the chain corresponds to 675–834 (TVERMESPID…KEASALGVEN (160 aa)). Ser704 and Thr705 together coordinate L-glutamate. Ser725 is subject to Phosphoserine; by PKC. Residue Glu753 participates in L-glutamate binding. Thr761 bears the Phosphothreonine; by PKC mark. A disulfide bond links Cys765 and Cys819. An N-linked (GlcNAc...) asparagine glycan is attached at Asn766. Residues 835 to 855 (IGGIFIVLAAGLVLSVFVAIG) form a helical membrane-spanning segment. Residues 856–949 (EFLYKSRKNN…RRTQRKETVA (94 aa)) lie on the Cytoplasmic side of the membrane.

It belongs to the glutamate-gated ion channel (TC 1.A.10.1) family. GRIK1 subfamily. Homotetramer or heterotetramer of pore-forming glutamate receptor subunits. Tetramers may be formed by the dimerization of dimers. Can form functional heteromeric receptors with GRIK4 and GRIK5. Interacts with KLHL17. Expressed in the olfactory bulb (at protein level). Expressed in subsets of neurons throughout the developing and adult central and peripheral nervous systems. In the CNS principally in the medial amygdaloid nuclei, medial habenulae, pyriform and cingulate cortices, and Purkinje cell layer. Also highly expressed in embryonic and adult dorsal root ganglia. Expressed at high levels in the trigeminal ganglion neurons.

It localises to the cell membrane. The protein resides in the postsynaptic cell membrane. It catalyses the reaction Ca(2+)(in) = Ca(2+)(out). Functionally, ionotropic glutamate receptor that functions as a cation-permeable ligand-gated ion channel, gated by L-glutamate and the glutamatergic agonist kainic acid. L-glutamate acts as an excitatory neurotransmitter at many synapses in the central nervous system. Binding of the excitatory neurotransmitter L-glutamate induces a conformation change, leading to the opening of the cation channel, and thereby converts the chemical signal to an electrical impulse. The receptor then desensitizes rapidly and enters a transient inactive state, characterized by the presence of bound agonist. This chain is Glutamate receptor ionotropic, kainate 1 (Grik1), found in Rattus norvegicus (Rat).